The chain runs to 220 residues: Peptide methionine sulfoxide reductase MsrA (220 aa).

C59 is a catalytic residue.

Belongs to the MsrA Met sulfoxide reductase family.

It carries out the reaction L-methionyl-[protein] + [thioredoxin]-disulfide + H2O = L-methionyl-(S)-S-oxide-[protein] + [thioredoxin]-dithiol. The catalysed reaction is [thioredoxin]-disulfide + L-methionine + H2O = L-methionine (S)-S-oxide + [thioredoxin]-dithiol. In terms of biological role, has an important function as a repair enzyme for proteins that have been inactivated by oxidation. Catalyzes the reversible oxidation-reduction of methionine sulfoxide in proteins to methionine. This is Peptide methionine sulfoxide reductase MsrA from Corynebacterium kroppenstedtii (strain DSM 44385 / JCM 11950 / CIP 105744 / CCUG 35717).